The sequence spans 313 residues: Olfactory receptor 56A4 (313 aa).

Over 1 to 28 (MASPSNDSTAPVSEFLLICFPNFQSWQH) the chain is Extracellular. An N-linked (GlcNAc...) asparagine glycan is attached at Asn-6. Residues 29-49 (WLSLPLSLLFLLAMGANTTLL) form a helical membrane-spanning segment. The Cytoplasmic portion of the chain corresponds to 50–57 (ITIQLEAS). A helical transmembrane segment spans residues 58–78 (LHQPLYYLLSLLSLLDIVLCL). Topologically, residues 79–102 (TVIPKVLAIFWFDLRSISFPACFL) are extracellular. The cysteines at positions 100 and 192 are disulfide-linked. A helical transmembrane segment spans residues 103 to 123 (QMFIMNSFLTMESCTFMVMAY). Topologically, residues 124–142 (DRYVAICHPLRYPSIITDQ) are cytoplasmic. Residues 143 to 163 (FVARAVVFVIARNAFVSLPVP) traverse the membrane as a helical segment. Residues 164–199 (MLSARLRYCAGNIIKNCICSNLSVSKLSCDDITFNQ) lie on the Extracellular side of the membrane. An N-linked (GlcNAc...) asparagine glycan is attached at Asn-184. Residues 200-220 (LYQFVAGWTLLGSDLILIVIS) traverse the membrane as a helical segment. Topologically, residues 221 to 240 (YSFILKVVLRIKAEGAVAKA) are cytoplasmic. The chain crosses the membrane as a helical span at residues 241-261 (LSTCGSHFILILFFSTVLLVL). The Extracellular portion of the chain corresponds to 262 to 276 (VITNLARKRIPPDVP). A helical membrane pass occupies residues 277-297 (ILLNILHHLIPPALNPIVYGV). The Cytoplasmic segment spans residues 298–313 (RTKEIKQGIQNLLKRL).

It belongs to the G-protein coupled receptor 1 family.

The protein localises to the cell membrane. In terms of biological role, odorant receptor. The protein is Olfactory receptor 56A4 (OR56A4) of Homo sapiens (Human).